A 202-amino-acid polypeptide reads, in one-letter code: Syndecan-2 (202 aa).

Residues 1–18 (MQRAWILLTLGLMACVSA) form the signal peptide. Over 19–145 (ETRTELTSDK…HSDNLFKRTE (127 aa)) the chain is Extracellular. O-linked (Xyl...) (glycosaminoglycan) serine glycans are attached at residues Ser-41, Ser-55, and Ser-57. Disordered stretches follow at residues 41–63 (SGVYPIDDDDYSSASGSGADEDI) and 88–118 (ETMTLKTQSITPAQTESPEETDKEEVDISEA). Residues 91–103 (TLKTQSITPAQTE) show a composition bias toward polar residues. Residues 104–117 (SPEETDKEEVDISE) are compositionally biased toward acidic residues. Phosphoserine is present on Ser-116. Residues 146 to 170 (VLAAVIAGGVIGFLFAIFLILLLVY) traverse the membrane as a helical segment. Topologically, residues 171 to 202 (RMRKKDEGSYDLGERKPSSAAYQKAPTKEFYA) are cytoplasmic. The interval 179–202 (SYDLGERKPSSAAYQKAPTKEFYA) is disordered. At Ser-188 the chain carries Phosphoserine.

It belongs to the syndecan proteoglycan family. Interacts (via cytoplasmic domain) with SARM1. Forms a complex with SDCBP and PDCD6IP. Post-translationally, O-glycosylated; contains both heparan sulfate and chondroitin sulfate. In terms of processing, phosphorylated on serine residues. Preferential expression in cells of mesenchymal origin.

It localises to the membrane. Its function is as follows. Cell surface proteoglycan which regulates dendritic arbor morphogenesis. This is Syndecan-2 (Sdc2) from Mus musculus (Mouse).